Consider the following 359-residue polypeptide: Putative nucleotidyltransferase MAB21L1 (359 aa).

A ribonucleoside 5'-triphosphate is bound by residues 23–24 (RK) and 63–66 (FEGL). The Mg(2+) site is built by glutamate 73 and glutamate 75. A ribonucleoside 5'-triphosphate contacts are provided by residues lysine 248 and 252–255 (SLLK).

Belongs to the mab-21 family. As to quaternary structure, monomer. Homodecamer; composed of 2 back to back homopentamers. The protein may exist as monomer in solution and oiligomerizes upon ligand binding.

It is found in the nucleus. In terms of biological role, putative nucleotidyltransferase required for several aspects of embryonic development including normal development of the eye. It is unclear whether it displays nucleotidyltransferase activity in vivo. Binds single-stranded RNA (ssRNA). The chain is Putative nucleotidyltransferase MAB21L1 (mab21l1) from Danio rerio (Zebrafish).